The following is a 241-amino-acid chain: Carboxy-S-adenosyl-L-methionine synthase (241 aa).

S-adenosyl-L-methionine is bound by residues tyrosine 38, 63–65 (GCS), 88–89 (DN), 116–117 (DI), asparagine 131, and arginine 198.

The protein belongs to the class I-like SAM-binding methyltransferase superfamily. Cx-SAM synthase family. Homodimer.

The enzyme catalyses prephenate + S-adenosyl-L-methionine = carboxy-S-adenosyl-L-methionine + 3-phenylpyruvate + H2O. Catalyzes the conversion of S-adenosyl-L-methionine (SAM) to carboxy-S-adenosyl-L-methionine (Cx-SAM). The sequence is that of Carboxy-S-adenosyl-L-methionine synthase from Actinobacillus pleuropneumoniae serotype 3 (strain JL03).